The sequence spans 502 residues: MNRFIDRVVLHLAAGDGGNGCVSVHREKFKPLGGPDGGNGGHGGDIILEVSPQVHTLLDFHYHPHVKAPRGANGAGDNRSGARGEDLILEVPAGTVVLNSKGETLADLTTVGMKFIAAAGGQGGLGNAALASRARKAPGFALNGEPGEQHDLILELKSMADVGLVGFPSAGKSSLISVMSAAKPKIGDYPFTTLQPNLGVVEVGHQTFIMADVPGLIPGASEGKGLGLDFLRHIERTSVLVHVVDTASMDPGRDPISDIEALEAELAAYQSALDEDTGLGDLDKRPRVVVLNKADVPEALELAEFLKGDIEQQFGWPVFIVSAVAQRGLDPLKYKLLEIVQQARKKRPKEKLAESVIIKPKPVDGRRRREEFEIRKDPDNPGGFLVVGEKPERWILQTDFENDEAVGYLADRLAKLGVEDKLRKAGAQTGSEVTIGGVTFEWEPMTSAVDTAASPRGTDIRLEKNERISAAERKRASQVRRGLIDEFDYGDGEEASRERWEG.

The Obg domain occupies 2–159 (NRFIDRVVLH…HDLILELKSM (158 aa)). Residues 160–341 (ADVGLVGFPS…LKYKLLEIVQ (182 aa)) form the OBG-type G domain. GTP is bound by residues 166-173 (GFPSAGKS), 191-195 (FTTLQ), 212-215 (DVPG), 292-295 (NKAD), and 322-324 (SAV). 2 residues coordinate Mg(2+): Ser-173 and Thr-193. An OCT domain is found at 364–444 (DGRRRREEFE…IGGVTFEWEP (81 aa)).

This sequence belongs to the TRAFAC class OBG-HflX-like GTPase superfamily. OBG GTPase family. In terms of assembly, monomer. It depends on Mg(2+) as a cofactor.

The protein localises to the cytoplasm. Functionally, an essential GTPase which binds GTP, GDP and possibly (p)ppGpp with moderate affinity, with high nucleotide exchange rates and a fairly low GTP hydrolysis rate. Plays a role in control of the cell cycle, stress response, ribosome biogenesis and in those bacteria that undergo differentiation, in morphogenesis control. In Corynebacterium efficiens (strain DSM 44549 / YS-314 / AJ 12310 / JCM 11189 / NBRC 100395), this protein is GTPase Obg.